We begin with the raw amino-acid sequence, 226 residues long: Leucyl/phenylalanyl-tRNA--protein transferase (226 aa).

It belongs to the L/F-transferase family.

The protein resides in the cytoplasm. The catalysed reaction is N-terminal L-lysyl-[protein] + L-leucyl-tRNA(Leu) = N-terminal L-leucyl-L-lysyl-[protein] + tRNA(Leu) + H(+). It carries out the reaction N-terminal L-arginyl-[protein] + L-leucyl-tRNA(Leu) = N-terminal L-leucyl-L-arginyl-[protein] + tRNA(Leu) + H(+). The enzyme catalyses L-phenylalanyl-tRNA(Phe) + an N-terminal L-alpha-aminoacyl-[protein] = an N-terminal L-phenylalanyl-L-alpha-aminoacyl-[protein] + tRNA(Phe). Its function is as follows. Functions in the N-end rule pathway of protein degradation where it conjugates Leu, Phe and, less efficiently, Met from aminoacyl-tRNAs to the N-termini of proteins containing an N-terminal arginine or lysine. This Stutzerimonas stutzeri (strain A1501) (Pseudomonas stutzeri) protein is Leucyl/phenylalanyl-tRNA--protein transferase.